The following is a 338-amino-acid chain: RNA 3'-terminal phosphate cyclase (338 aa).

ATP contacts are provided by residues glutamine 103 and 283 to 287 (YLADQ). The active-site Tele-AMP-histidine intermediate is the histidine 308.

This sequence belongs to the RNA 3'-terminal cyclase family. Type 1 subfamily.

The protein resides in the cytoplasm. The enzyme catalyses a 3'-end 3'-phospho-ribonucleotide-RNA + ATP = a 3'-end 2',3'-cyclophospho-ribonucleotide-RNA + AMP + diphosphate. Its function is as follows. Catalyzes the conversion of 3'-phosphate to a 2',3'-cyclic phosphodiester at the end of RNA. The mechanism of action of the enzyme occurs in 3 steps: (A) adenylation of the enzyme by ATP; (B) transfer of adenylate to an RNA-N3'P to produce RNA-N3'PP5'A; (C) and attack of the adjacent 2'-hydroxyl on the 3'-phosphorus in the diester linkage to produce the cyclic end product. The biological role of this enzyme is unknown but it is likely to function in some aspects of cellular RNA processing. In Escherichia coli (strain K12 / MC4100 / BW2952), this protein is RNA 3'-terminal phosphate cyclase.